The following is a 377-amino-acid chain: Delta(12) fatty acid desaturase DES8.11 (377 aa).

A run of 2 helical transmembrane segments spans residues 55 to 75 (LIVAYVFYYLANTYIPLIPTP) and 79 to 99 (LAWPVYWFCQASILTGLWVIG). A Histidine box-1 motif is present at residues 100-104 (HECGH). The chain crosses the membrane as a helical span at residues 112 to 132 (LIDDIVGFVLHSALLTPYFSW). A Histidine box-2 motif is present at residues 136–140 (HRNHH). The next 3 membrane-spanning stretches (helical) occupy residues 174–194 (VFTLVFRLTLGFPLYLLTNIS), 220–240 (VLLSDFGLLAVFYAIKLLVAA), and 244–264 (AWVINMYAIPVLGVSVFFVLI). Residues 310–314 (HVLHH) carry the Histidine box-3 motif.

This sequence belongs to the fatty acid desaturase type 1 family.

It is found in the membrane. Its pathway is lipid metabolism; polyunsaturated fatty acid biosynthesis. In terms of biological role, converts linoleic acid into a conjugated octadecatrienoic acid, probably calendic acid. The protein is Delta(12) fatty acid desaturase DES8.11 of Calendula officinalis (Pot marigold).